Consider the following 268-residue polypeptide: Fatty acid elongase sre1 (268 aa).

A run of 7 helical transmembrane segments spans residues 31–51 (VFPF…QAIM), 62–82 (FSII…SGVM), 110–130 (IGFW…DTVI), 137–157 (PIIF…WQWL), 161–181 (WLVG…LMYY), 198–218 (ITKA…YWFV), and 227–247 (APLS…ILFG).

The protein belongs to the ELO family.

It is found in the membrane. It carries out the reaction a very-long-chain acyl-CoA + malonyl-CoA + H(+) = a very-long-chain 3-oxoacyl-CoA + CO2 + CoA. Its function is as follows. Could be implicated in synthesis of very long chain fatty acids. In Dictyostelium discoideum (Social amoeba), this protein is Fatty acid elongase sre1 (sre1).